The primary structure comprises 420 residues: Transcription termination factor Rho (420 aa).

The Rho RNA-BD domain maps to 49-124 (DIFGGGVLEI…LKVDQVNDDK (76 aa)). ATP contacts are provided by residues 170–175 (GKGQRG), 182–187 (KAGKTM), and R213.

The protein belongs to the Rho family. Homohexamer. The homohexamer assembles into an open ring structure.

In terms of biological role, facilitates transcription termination by a mechanism that involves Rho binding to the nascent RNA, activation of Rho's RNA-dependent ATPase activity, and release of the mRNA from the DNA template. This Haemophilus influenzae (strain ATCC 51907 / DSM 11121 / KW20 / Rd) protein is Transcription termination factor Rho.